A 386-amino-acid chain; its full sequence is Patatin (386 aa).

Positions 1 to 23 (MATTKSFLILFFMILATTSSTCA) are cleaved as a signal peptide. Residues 32–229 (LSIDGGGIKG…TVGDPALLSL (198 aa)) form the PNPLA domain. The GXGXXG signature appears at 36–41 (GGGIKG). Residues 75–79 (GTSTG) carry the GXSXG motif. Ser-77 acts as the Nucleophile in catalysis. The N-linked (GlcNAc...) asparagine glycan is linked to Asn-115. Residue Asp-215 is the Proton acceptor of the active site. Positions 215 to 217 (DGA) match the DGA/G motif.

The protein belongs to the patatin family.

The protein localises to the vacuole. Probable lipolytic acyl hydrolase (LAH), an activity which is thought to be involved in the response of tubers to pathogens. This is Patatin from Solanum tuberosum (Potato).